A 232-amino-acid polypeptide reads, in one-letter code: RNA chaperone ProQ (232 aa).

The disordered stretch occupies residues 105 to 182 (EAKARVQAQR…REEQHTPVSD (78 aa)). The segment covering 117–136 (QQAKKREAAAAAGEKEDAPR) has biased composition (basic and acidic residues). The segment covering 137 to 146 (RERKPRPTTP) has biased composition (basic residues). The segment covering 147–177 (RRKEGAERKPRAQKPVEKAPKTVKAPREEQH) has biased composition (basic and acidic residues).

Belongs to the ProQ family.

The protein localises to the cytoplasm. Functionally, RNA chaperone with significant RNA binding, RNA strand exchange and RNA duplexing activities. May regulate ProP activity through an RNA-based, post-transcriptional mechanism. The polypeptide is RNA chaperone ProQ (Escherichia coli (strain ATCC 8739 / DSM 1576 / NBRC 3972 / NCIMB 8545 / WDCM 00012 / Crooks)).